The chain runs to 79 residues: Sec-independent protein translocase protein TatA (79 aa).

Residues 1-21 (MGGISIWQLLIIALIVVLLFG) traverse the membrane as a helical segment. A disordered region spans residues 43–79 (MSSEEDKKALEDTEAAKTAQTTQQATEKKPESNKEQA). Residues 46 to 57 (EEDKKALEDTEA) are compositionally biased toward basic and acidic residues. Residues 58–67 (AKTAQTTQQA) are compositionally biased toward low complexity. Positions 68–79 (TEKKPESNKEQA) are enriched in basic and acidic residues.

The protein belongs to the TatA/E family. In terms of assembly, the Tat system comprises two distinct complexes: a TatABC complex, containing multiple copies of TatA, TatB and TatC subunits, and a separate TatA complex, containing only TatA subunits. Substrates initially bind to the TatABC complex, which probably triggers association of the separate TatA complex to form the active translocon.

Its subcellular location is the cell inner membrane. Part of the twin-arginine translocation (Tat) system that transports large folded proteins containing a characteristic twin-arginine motif in their signal peptide across membranes. TatA could form the protein-conducting channel of the Tat system. This is Sec-independent protein translocase protein TatA from Shewanella putrefaciens (strain CN-32 / ATCC BAA-453).